The primary structure comprises 359 residues: Aromatic amino acid aminotransferase (359 aa).

Lys-223 is modified (N6-(pyridoxal phosphate)lysine).

It belongs to the class-II pyridoxal-phosphate-dependent aminotransferase family. Homodimer. The cofactor is pyridoxal 5'-phosphate.

The catalysed reaction is an aromatic L-alpha-amino acid + 2-oxoglutarate = an aromatic oxo-acid + L-glutamate. In terms of biological role, aminotransferase that catalyzes the conversion of aromatic amino acids and 2-oxoglutarate into corresponding aromatic oxo acids and L-glutamate. This is Aromatic amino acid aminotransferase from Streptomyces avermitilis (strain ATCC 31267 / DSM 46492 / JCM 5070 / NBRC 14893 / NCIMB 12804 / NRRL 8165 / MA-4680).